The primary structure comprises 476 residues: MLKVYNTLTRKEEEFKPLNENEVKMYVCGPTVYDHTHLGHGRTYVSFDIIRRYLEHIGYTVNLVINFTDIDDKIIKRSQEKGKNPKELSETFVNVFLNDMATLKVKPADIYPKVTEHIPEIIAFIEKLIEKGFAYKTENGVYFEVKKFENYGKLSNINLEDLISGARIEPSDEKKNPEDFALWKTAKPGEPKWESPFGEGRPGWHIECSAMSSKYLGEQFDIHGGGRDLSFPHHENEIAQSVAYSGKDWVNYWLHTGFVMVNGEKMSKSLGNFITIEDISKEYDPEILRFFFIQRHYRSPIDYTAESMSHVKNNLEKIYNVIENIRISLEKSEKSGIWNENEFLLYDILKNSKHNFYEAMNSDFNTVEALKSVFEVSNGVNKYLSLVKTPSEGLLLKAFDFFKIVGEIFGLFENYFKESSESNDEGFVKFLIELRSDLRLQKNYEMSDKIRDGLKELGYQIEDNPKEGTVFKKINI.

C28 is a binding site for Zn(2+). The 'HIGH' region motif lies at 30 to 40 (PTVYDHTHLGH). Residues C208, H233, and E237 each coordinate Zn(2+). Residues 265–269 (KMSKS) carry the 'KMSKS' region motif. K268 serves as a coordination point for ATP.

Belongs to the class-I aminoacyl-tRNA synthetase family. It depends on Zn(2+) as a cofactor.

It is found in the cytoplasm. It carries out the reaction tRNA(Cys) + L-cysteine + ATP = L-cysteinyl-tRNA(Cys) + AMP + diphosphate. The sequence is that of Cysteine--tRNA ligase from Methanococcus maripaludis (strain C7 / ATCC BAA-1331).